Consider the following 268-residue polypeptide: Helix-loop-helix protein 25 (268 aa).

Residues 1-23 (MPKVIQSSMSDYRSVPYNQTPKS) are compositionally biased toward polar residues. The tract at residues 1–29 (MPKVIQSSMSDYRSVPYNQTPKSASERKR) is disordered. Residues 92–105 (ERRKVKTEREKIRR) are basic motif. The bHLH domain occupies 92-149 (ERRKVKTEREKIRRKKQDDCYAELKFFILNKQMGSYEQRLKLERITILEIIIDYIKHN). A helix-loop-helix motif region spans residues 106-149 (KKQDDCYAELKFFILNKQMGSYEQRLKLERITILEIIIDYIKHN).

It localises to the nucleus. Its function is as follows. Probable transcription factor. Modulates lifespan and also recovery from the developmentally arrested larval state known as dauer, perhaps acting upstream of phosphatase PTEN/daf-18. Regulates expression of genes involved in cell division, cell-cycle regulation, and sexual reproduction, including daf-18. This is Helix-loop-helix protein 25 from Caenorhabditis elegans.